Reading from the N-terminus, the 2542-residue chain is Talin-2 (2542 aa).

Residues 88–406 (RPQKIRMLDG…GYIDIILKKK (319 aa)) form the FERM domain. Residues 312–406 (GVSFFLVKEK…GYIDIILKKK (95 aa)) are interaction with PIP5K1C. S428, S449, S623, and S1023 each carry phosphoserine. The residue at position 1665 (Y1665) is a Phosphotyrosine. T1843 is modified (phosphothreonine). The I/LWEQ domain occupies 2294 to 2533 (TEWVDPEDPT…QIRQQQYKFL (240 aa)).

In terms of assembly, interacts directly with PIP5K1C.

The protein resides in the cytoplasm. Its subcellular location is the cell junction. It localises to the focal adhesion. The protein localises to the synapse. It is found in the cell membrane. The protein resides in the cytoskeleton. In terms of biological role, as a major component of focal adhesion plaques that links integrin to the actin cytoskeleton, may play an important role in cell adhesion. Recruits PIP5K1C to focal adhesion plaques and strongly activates its kinase activity. The polypeptide is Talin-2 (TLN2) (Homo sapiens (Human)).